Here is a 270-residue protein sequence, read N- to C-terminus: Type III pantothenate kinase (270 aa).

Residue 19–26 (DIGNTSTT) participates in ATP binding. Residues Tyr109 and 116–119 (GADR) each bind substrate. Asp118 (proton acceptor) is an active-site residue. Asp139 serves as a coordination point for K(+). Position 142 (Thr142) interacts with ATP. Thr194 contacts substrate.

Belongs to the type III pantothenate kinase family. As to quaternary structure, homodimer. NH4(+) serves as cofactor. The cofactor is K(+).

Its subcellular location is the cytoplasm. It catalyses the reaction (R)-pantothenate + ATP = (R)-4'-phosphopantothenate + ADP + H(+). It functions in the pathway cofactor biosynthesis; coenzyme A biosynthesis; CoA from (R)-pantothenate: step 1/5. In terms of biological role, catalyzes the phosphorylation of pantothenate (Pan), the first step in CoA biosynthesis. This is Type III pantothenate kinase from Chlorobaculum tepidum (strain ATCC 49652 / DSM 12025 / NBRC 103806 / TLS) (Chlorobium tepidum).